Reading from the N-terminus, the 298-residue chain is CD-NTase-associated protein 6 (298 aa).

Residues 80–85 (GTGKTA) and 204–205 (RR) each bind ATP.

Belongs to the AAA ATPase family. In terms of assembly, homohexamer, forms a 1:1:6 CdnC:Cap7:Cap6 complex.

Functionally, regulates complex assembly in a CBASS antivirus system. CBASS (cyclic oligonucleotide-based antiphage signaling system) provides immunity against bacteriophage. The CD-NTase protein synthesizes cyclic nucleotides in response to infection; these serve as specific second messenger signals. The signals activate a diverse range of effectors, leading to bacterial cell death and thus abortive phage infection. A type III CBASS system. Expression of this CBASS system (Cap18-Cap6-Cap7-CdnC-CapW-Cap17) in a susceptible E.coli (strain MG1655) confers resistance to bacteriophage P1. Binds and disassembles an active CdnC:Cap7 complex, inhibiting the complex's ability to synthesize cyclic nucleotide second messengers. An AAA+-ATPase remodeler, in the absence of foreign threat Cap6 probably maintains the Cap7 protein in its open, inactive state. Once activated (presumably by a bacteriophage protein) Cap7 binds to and activates its cognate CD-NTase (CdnC in this bacteria) to synthesize a cyclic nucleotide second messenger which leads to abortive phage infection. The protein is CD-NTase-associated protein 6 of Escherichia coli (strain KTE188).